Reading from the N-terminus, the 490-residue chain is Glutamate--tRNA ligase (490 aa).

Residues 13-23 (PSPTGTPHVGL) carry the 'HIGH' region motif. The 'KMSKS' region signature appears at 257–261 (KLSKR). Lys-260 provides a ligand contact to ATP.

It belongs to the class-I aminoacyl-tRNA synthetase family. Glutamate--tRNA ligase type 1 subfamily. In terms of assembly, monomer.

It localises to the cytoplasm. The catalysed reaction is tRNA(Glu) + L-glutamate + ATP = L-glutamyl-tRNA(Glu) + AMP + diphosphate. Its function is as follows. Catalyzes the attachment of glutamate to tRNA(Glu) in a two-step reaction: glutamate is first activated by ATP to form Glu-AMP and then transferred to the acceptor end of tRNA(Glu). The sequence is that of Glutamate--tRNA ligase from Mycobacterium bovis (strain BCG / Pasteur 1173P2).